A 94-amino-acid chain; its full sequence is Protein P19 (94 aa).

Functionally, binds to single-stranded DNA (ssDNA). In Acinetobacter calcoaceticus (Arthrobacter siderocapsulatus), this protein is Protein P19 (XIX).